A 506-amino-acid chain; its full sequence is Cytochrome P450 52B1 (506 aa).

Position 451 (Cys451) interacts with heme.

The protein belongs to the cytochrome P450 family. Heme is required as a cofactor.

Its function is as follows. Together with an NADPH cytochrome P450 the enzyme system catalyzes the terminal hydroxylation as the first step in the assimilation of alkanes and fatty acids. In Candida tropicalis (Yeast), this protein is Cytochrome P450 52B1 (CYP52B1).